The following is a 178-amino-acid chain: MDKKTRLKLDGVIVCEGKTDQARLQQLFDVSVITTNGSALNQRTINLIKAVAKKQPVILFLDPDVAGQKIRRQLEQHLDKYESCFIARKDMKPNSTKIGVAEATDAALIQALQQRQVFTKTTQPTLSWEQYLELNLNSKSKRLALCNKLHLSYFNHKQLFRKLNLLQLTFDQVCQLLK.

The 94-residue stretch at 10–103 (DGVIVCEGKT…NSTKIGVAEA (94 aa)) folds into the Toprim domain. Residues E16, D62, and D64 each contribute to the Mg(2+) site.

The protein belongs to the ribonuclease M5 family. It depends on Mg(2+) as a cofactor.

The protein resides in the cytoplasm. It carries out the reaction Endonucleolytic cleavage of RNA, removing 21 and 42 nucleotides, respectively, from the 5'- and 3'-termini of a 5S-rRNA precursor.. Functionally, required for correct processing of both the 5' and 3' ends of 5S rRNA precursor. Cleaves both sides of a double-stranded region yielding mature 5S rRNA in one step. In Mycoplasma pneumoniae (strain ATCC 29342 / M129 / Subtype 1) (Mycoplasmoides pneumoniae), this protein is Ribonuclease M5.